The following is a 415-amino-acid chain: Putative competence-damage inducible protein (415 aa).

This sequence belongs to the CinA family.

The chain is Putative competence-damage inducible protein from Listeria welshimeri serovar 6b (strain ATCC 35897 / DSM 20650 / CCUG 15529 / CIP 8149 / NCTC 11857 / SLCC 5334 / V8).